Reading from the N-terminus, the 185-residue chain is Peptidyl-tRNA hydrolase (185 aa).

Residue Y14 coordinates tRNA. The active-site Proton acceptor is H19. The tRNA site is built by F64, N66, and N112.

Belongs to the PTH family. In terms of assembly, monomer.

It localises to the cytoplasm. It carries out the reaction an N-acyl-L-alpha-aminoacyl-tRNA + H2O = an N-acyl-L-amino acid + a tRNA + H(+). In terms of biological role, hydrolyzes ribosome-free peptidyl-tRNAs (with 1 or more amino acids incorporated), which drop off the ribosome during protein synthesis, or as a result of ribosome stalling. Catalyzes the release of premature peptidyl moieties from peptidyl-tRNA molecules trapped in stalled 50S ribosomal subunits, and thus maintains levels of free tRNAs and 50S ribosomes. The polypeptide is Peptidyl-tRNA hydrolase (Alkaliphilus metalliredigens (strain QYMF)).